The primary structure comprises 524 residues: Cytosolic Fe-S cluster assembly factor NAR1 (524 aa).

[4Fe-4S] cluster contacts are provided by C20, C52, C55, C58, C158, and C206. The disordered stretch occupies residues 362-388 (IRKRPTANGNDNSISLSSSINNQDNNN). The span at 369 to 388 (NGNDNSISLSSSINNQDNNN) shows a compositional bias: low complexity. Residues C408 and C412 each coordinate [4Fe-4S] cluster. The interval 501–524 (SSISETHNGDSKNTIEQPVQFTTW) is disordered.

Belongs to the NARF family.

Its function is as follows. Component of the cytosolic Fe/S protein assembly machinery. Required for maturation of extramitochondrial Fe/S proteins. May play a role in the transfer of pre-assembled Fe/S clusters to target apoproteins. In Vanderwaltozyma polyspora (strain ATCC 22028 / DSM 70294 / BCRC 21397 / CBS 2163 / NBRC 10782 / NRRL Y-8283 / UCD 57-17) (Kluyveromyces polysporus), this protein is Cytosolic Fe-S cluster assembly factor NAR1 (NAR1).